The chain runs to 117 residues: Immunoglobulin kappa variable 1D-43 (117 aa).

A signal peptide spans 1–22 (MDMRVPAQRLGLLLLWFPGARC). Residues 23 to 45 (AIRMTQSPFSLSASVGDRVTITC) form a framework-1 region. In terms of domain architecture, Ig-like spans 23–117 (AIRMTQSPFS…YYCQQYYSTP (95 aa)). Residues cysteine 45 and cysteine 110 are joined by a disulfide bond. Residues 46–56 (WASQGISSYLA) are complementarity-determining-1. Positions 57–71 (WYQQKPAKAPKLFIY) are framework-2. The segment at 72–78 (YASSLQS) is complementarity-determining-2. The segment at 79 to 110 (GVPSRFSGSGSGTDYTLTISSLQPEDFATYYC) is framework-3. The segment at 111–117 (QQYYSTP) is complementarity-determining-3.

As to quaternary structure, immunoglobulins are composed of two identical heavy chains and two identical light chains; disulfide-linked.

It is found in the secreted. The protein resides in the cell membrane. In terms of biological role, v region of the variable domain of immunoglobulin light chains that participates in the antigen recognition. Immunoglobulins, also known as antibodies, are membrane-bound or secreted glycoproteins produced by B lymphocytes. In the recognition phase of humoral immunity, the membrane-bound immunoglobulins serve as receptors which, upon binding of a specific antigen, trigger the clonal expansion and differentiation of B lymphocytes into immunoglobulins-secreting plasma cells. Secreted immunoglobulins mediate the effector phase of humoral immunity, which results in the elimination of bound antigens. The antigen binding site is formed by the variable domain of one heavy chain, together with that of its associated light chain. Thus, each immunoglobulin has two antigen binding sites with remarkable affinity for a particular antigen. The variable domains are assembled by a process called V-(D)-J rearrangement and can then be subjected to somatic hypermutations which, after exposure to antigen and selection, allow affinity maturation for a particular antigen. This Homo sapiens (Human) protein is Immunoglobulin kappa variable 1D-43.